Here is a 233-residue protein sequence, read N- to C-terminus: Phosphatidylserine decarboxylase proenzyme (233 aa).

Ser-201 (schiff-base intermediate with substrate; via pyruvic acid) is an active-site residue. Ser-201 is modified (pyruvic acid (Ser); by autocatalysis).

Belongs to the phosphatidylserine decarboxylase family. PSD-A subfamily. In terms of assembly, heterodimer of a large membrane-associated beta subunit and a small pyruvoyl-containing alpha subunit. Pyruvate is required as a cofactor. In terms of processing, is synthesized initially as an inactive proenzyme. Formation of the active enzyme involves a self-maturation process in which the active site pyruvoyl group is generated from an internal serine residue via an autocatalytic post-translational modification. Two non-identical subunits are generated from the proenzyme in this reaction, and the pyruvate is formed at the N-terminus of the alpha chain, which is derived from the carboxyl end of the proenzyme. The post-translation cleavage follows an unusual pathway, termed non-hydrolytic serinolysis, in which the side chain hydroxyl group of the serine supplies its oxygen atom to form the C-terminus of the beta chain, while the remainder of the serine residue undergoes an oxidative deamination to produce ammonia and the pyruvoyl prosthetic group on the alpha chain.

The protein resides in the cell membrane. It catalyses the reaction a 1,2-diacyl-sn-glycero-3-phospho-L-serine + H(+) = a 1,2-diacyl-sn-glycero-3-phosphoethanolamine + CO2. The protein operates within phospholipid metabolism; phosphatidylethanolamine biosynthesis; phosphatidylethanolamine from CDP-diacylglycerol: step 2/2. Functionally, catalyzes the formation of phosphatidylethanolamine (PtdEtn) from phosphatidylserine (PtdSer). This chain is Phosphatidylserine decarboxylase proenzyme, found in Mycolicibacterium vanbaalenii (strain DSM 7251 / JCM 13017 / BCRC 16820 / KCTC 9966 / NRRL B-24157 / PYR-1) (Mycobacterium vanbaalenii).